The sequence spans 488 residues: MKKKLAAGLTASAIVGTTLVVTPAEAATIKVKSGDSLWKLAQTYNTSVAALTSANHLSTTVLSIGQTLTIPGSKSSTSSSTSSSTTKKSGSSVYTVKSGDSLWLIANEFKMTVQELKKLNGLSSDLIRAGQKLKVSGTVSSSSSSSKKSNSNKSSSSSSKSSSNKSSSSSSSTGTYKVQLGDSLWKIANKVNMSIAELKVLNNLKSDTIYVNQVLKTKSSGSDTSSKDNSSKSNQTSATTKYTVKSGDSLWKIANNYNLTVQQIRNINNLKSDVLYVGQVLKLTGKASSGSSSSSSSSSNASSGTTTTYTVKSGDSLWVIAQKFNVTAQQIREKNNLKTDVLQVGQKLVISGKASSSSSSGSSNTTSSTSAKINTMISAAKAQLGVPYRWGGTTPSGFDCSGFIYYVLNKVTSVSRLTAAGYWNTMKSVSQPAVGDFVFFSTYKAGPSHVGIYLGNGEFINANDSGVVISNMNNSYWKQRYLGAKRYF.

Positions 1–26 (MKKKLAAGLTASAIVGTTLVVTPAEA) are cleaved as a signal peptide. 2 LysM domains span residues 27 to 70 (ATIK…TLTI) and 92 to 135 (SVYT…KLKV). Disordered stretches follow at residues 70-93 (IPGSKSSTSSSTSSSTTKKSGSSV), 137-176 (GTVSSSSSSSKKSNSNKSSSSSSKSSSNKSSSSSSSTGTY), and 218-239 (KSSGSDTSSKDNSSKSNQTSAT). Low complexity-rich tracts occupy residues 72–93 (GSKSSTSSSTSSSTTKKSGSSV) and 140–172 (SSSSSSSKKSNSNKSSSSSSKSSSNKSSSSSSS). The LysM 3 domain occupies 174–217 (GTYKVQLGDSLWKIANKVNMSIAELKVLNNLKSDTIYVNQVLKT). Residues 240-283 (TKYTVKSGDSLWKIANNYNLTVQQIRNINNLKSDVLYVGQVLKL) form the LysM 4 domain. Positions 286–306 (KASSGSSSSSSSSSNASSGTT) are disordered. In terms of domain architecture, LysM 5 spans 307-350 (TTYTVKSGDSLWVIAQKFNVTAQQIREKNNLKTDVLQVGQKLVI). The 119-residue stretch at 370 to 488 (SAKINTMISA…QRYLGAKRYF (119 aa)) folds into the NlpC/P60 domain. The active-site Nucleophile is Cys400. The active-site Proton acceptor is His449. Residue Asn461 is part of the active site.

It belongs to the peptidase C40 family.

It localises to the secreted. Its subcellular location is the cell wall. With respect to regulation, is inhibited in vitro by para-hydroxymercuribenzoate, a sulfydryl inhibitor. Cell wall hydrolase that cleaves gamma-D-glutamate-meso-diaminopimelate bonds in peptidoglycan. LytF is necessary and sufficient for vegetative daughter cell separation, and also seems to play a role in cell autolysis. In Bacillus subtilis (strain 168), this protein is Peptidoglycan endopeptidase LytF (lytF).